The following is a 370-amino-acid chain: D-alanine--D-alanine ligase (370 aa).

Residues 144-352 (KKIFADAGIP…YSALIERLVD (209 aa)) enclose the ATP-grasp domain. 177–232 (EEVLTYPVFVKPANLGSSVGISKATNKKELEDAMTEAFLYDRRVVVEQGVVAREIE) lines the ATP pocket. Asp-306, Glu-319, and Asn-321 together coordinate Mg(2+).

It belongs to the D-alanine--D-alanine ligase family. The cofactor is Mg(2+). It depends on Mn(2+) as a cofactor.

The protein resides in the cytoplasm. It carries out the reaction 2 D-alanine + ATP = D-alanyl-D-alanine + ADP + phosphate + H(+). Its pathway is cell wall biogenesis; peptidoglycan biosynthesis. In terms of biological role, cell wall formation. The sequence is that of D-alanine--D-alanine ligase from Listeria welshimeri serovar 6b (strain ATCC 35897 / DSM 20650 / CCUG 15529 / CIP 8149 / NCTC 11857 / SLCC 5334 / V8).